The following is a 211-amino-acid chain: Prolactin-3C1 (211 aa).

Residues 1-29 form the signal peptide; the sequence is MQLSLTQARTWKGLLLLVSCMILWISVTP. 2 N-linked (GlcNAc...) asparagine glycosylation sites follow: Asn-77 and Asn-173. The cysteines at positions 80 and 187 are disulfide-linked.

The protein belongs to the somatotropin/prolactin family. Expressed exclusively in decidual tissue.

The protein localises to the secreted. This is Prolactin-3C1 (Prl3c1) from Rattus norvegicus (Rat).